Here is a 261-residue protein sequence, read N- to C-terminus: tRNA pseudouridine synthase A (261 aa).

Catalysis depends on aspartate 55, which acts as the Nucleophile. Substrate is bound at residue tyrosine 114.

Belongs to the tRNA pseudouridine synthase TruA family. As to quaternary structure, homodimer.

It catalyses the reaction uridine(38/39/40) in tRNA = pseudouridine(38/39/40) in tRNA. Functionally, formation of pseudouridine at positions 38, 39 and 40 in the anticodon stem and loop of transfer RNAs. The sequence is that of tRNA pseudouridine synthase A from Paracoccus denitrificans (strain Pd 1222).